Consider the following 695-residue polypeptide: L-type lectin-domain containing receptor kinase S.7 (695 aa).

Positions 1–23 (MPPRCRRLPLLFILLLAVRPLSA) are cleaved as a signal peptide. Topologically, residues 24–331 (AAASSIAAAP…NHRRRHLFYK (308 aa)) are extracellular. The segment at 37–276 (YRRISWASNL…VERWTFRTFG (240 aa)) is legume-lectin like. N-linked (GlcNAc...) asparagine glycans are attached at residues Asn45 and Asn279. The span at 286–320 (PTKYIGPMPPNNQPLPPPPSPSPSPPPPSPPPPPH) shows a compositional bias: pro residues. A disordered region spans residues 286–323 (PTKYIGPMPPNNQPLPPPPSPSPSPPPPSPPPPPHPNH). Residues 332 to 352 (VLGGVLGGMVLLGLVVVGSAV) form a helical membrane-spanning segment. The Cytoplasmic segment spans residues 353-695 (LLGRSVRRKN…TANTAFFSCR (343 aa)). Residue Thr376 is modified to Phosphothreonine. Ser378 is subject to Phosphoserine. Residues Thr386 and Thr403 each carry the phosphothreonine modification. Positions 389–661 (FDSGNVIGVG…SMLDGTAPLI (273 aa)) constitute a Protein kinase domain. ATP is bound by residues 395-403 (IGVGGSGAT) and Lys418. Asp514 functions as the Proton acceptor in the catalytic mechanism. Position 657 is a phosphothreonine (Thr657).

In the N-terminal section; belongs to the leguminous lectin family. This sequence in the C-terminal section; belongs to the protein kinase superfamily. Ser/Thr protein kinase family. Interacts with INP1. Interaction with INP1 is required for DAF1 polar localization at the future aperture sites in tetrads. In terms of processing, autophosphorylated at Thr-376; Ser-378; Thr-386; Thr-403 and Thr-657. In terms of tissue distribution, expressed in roots, leaves, lemma, palea, pistil and anthers.

It is found in the cell membrane. The protein resides in the cytoplasm. Its subcellular location is the cytosol. It catalyses the reaction L-seryl-[protein] + ATP = O-phospho-L-seryl-[protein] + ADP + H(+). It carries out the reaction L-threonyl-[protein] + ATP = O-phospho-L-threonyl-[protein] + ADP + H(+). In terms of biological role, legume-lectin receptor-like kinase required for normal pollen development and male fertility. Regulates pollen exine assembly and aperture development. Plays a critical role in annulus formation, and may participate in the formation of the fibrillar-granular layer underneath the operculum. May function by regulating the expression of genes involved in pollen exine development. Kinase activity is required for its function in pollen development. In Oryza sativa subsp. japonica (Rice), this protein is L-type lectin-domain containing receptor kinase S.7.